The chain runs to 381 residues: Guanine nucleotide-binding protein subunit alpha-12 (381 aa).

A lipid anchor (S-palmitoyl cysteine) is attached at Cys-11. Residues 56–381 (RLVKILLLGA…QENLKDIMLQ (326 aa)) form the G-alpha domain. A G1 motif region spans residues 59–72 (KILLLGAGESGKST). Residues 67-72 (ESGKST) and 202-205 (LLAR) contribute to the GTP site. Ser-71 contacts Mg(2+). Positions 200–208 (DILLARKAT) are G2 motif. Residue Thr-208 coordinates Mg(2+). At Thr-208 the chain carries Phosphothreonine. The G3 motif stretch occupies residues 223-232 (FKMVDVGGQR). Residues 292–299 (ILFLNKMD) are G4 motif. Residues 296 to 299 (NKMD) and Ala-353 each bind GTP. Positions 351–356 (TTAIDT) are G5 motif.

This sequence belongs to the G-alpha family. G(12) subfamily. As to quaternary structure, g proteins are composed of 3 units; alpha, beta and gamma. The alpha chain contains the guanine nucleotide binding site. Interacts with UBXD5. Interacts (in GTP-bound form) with PPP5C (via TPR repeats); activates PPP5C phosphatase activity and translocates PPP5C to the cell membrane. Interacts with RGS22. Interacts (via N-terminus) with NAPA; the interaction promotes CDH5 localization to plasma membrane. Interacts with CTNND1 (via N-terminus); the interaction regulates CDH1-mediated cell-cell adhesion. Interacts with PPP2R1A; the interaction promotes protein phosphatase 2A activation causing dephosphorylation of MAPT. Interacts (in GTP-bound form) with ARHGEF1. Interacts (in GTP-bound form) with ARHGEF11 (via RGS domain). Interacts (in GTP-bound form) with ARHGEF12 (via RGS domain).

The protein localises to the cell membrane. Its subcellular location is the lateral cell membrane. It localises to the cytoplasm. Its function is as follows. Guanine nucleotide-binding proteins (G proteins) are involved as modulators or transducers in various transmembrane signaling systems. Activates effector molecule RhoA by binding and activating RhoGEFs (ARHGEF12/LARG). GNA12-dependent Rho signaling subsequently regulates transcription factor AP-1 (activating protein-1). GNA12-dependent Rho signaling also regulates protein phosphatese 2A activation causing dephosphorylation of its target proteins. Promotes tumor cell invasion and metastasis by activating RhoA/ROCK signaling pathway and up-regulating pro-inflammatory cytokine production. Inhibits CDH1-mediated cell adhesion in process independent from Rho activation. Together with NAPA promotes CDH5 localization to plasma membrane. May play a role in the control of cell migration through the TOR signaling cascade. The protein is Guanine nucleotide-binding protein subunit alpha-12 (GNA12) of Homo sapiens (Human).